We begin with the raw amino-acid sequence, 213 residues long: Na(+)-translocating NADH-quinone reductase subunit E (213 aa).

6 helical membrane-spanning segments follow: residues 12–32 (AVFV…FLAV), 40–60 (IGLG…NQLI), 92–112 (FLGF…LEMF), 124–144 (LGIF…SLFM), 155–175 (VVFG…LAGI), and 191–211 (LGIT…FSGI).

The protein belongs to the NqrDE/RnfAE family. As to quaternary structure, composed of six subunits; NqrA, NqrB, NqrC, NqrD, NqrE and NqrF.

It is found in the cell inner membrane. The enzyme catalyses a ubiquinone + n Na(+)(in) + NADH + H(+) = a ubiquinol + n Na(+)(out) + NAD(+). NQR complex catalyzes the reduction of ubiquinone-1 to ubiquinol by two successive reactions, coupled with the transport of Na(+) ions from the cytoplasm to the periplasm. NqrA to NqrE are probably involved in the second step, the conversion of ubisemiquinone to ubiquinol. The sequence is that of Na(+)-translocating NADH-quinone reductase subunit E from Rhodopirellula baltica (strain DSM 10527 / NCIMB 13988 / SH1).